The following is a 302-amino-acid chain: Epoxyqueuosine reductase (302 aa).

Residue D128 is the Proton donor of the active site. One can recognise a 4Fe-4S ferredoxin-type 1 domain in the interval 170-202 (LPLQADGPIRDYCGTCTACIDACPTDAITPYEV). [4Fe-4S] cluster contacts are provided by C182, C185, C188, C192, C207, C234, C237, and C241. Positions 221–251 (NEFKGKMENWIFGCDICQDVCPWNSFARPHS) constitute a 4Fe-4S ferredoxin-type 2 domain.

Belongs to the QueG family. In terms of assembly, monomer. Cob(II)alamin serves as cofactor. It depends on [4Fe-4S] cluster as a cofactor.

It localises to the cytoplasm. It carries out the reaction epoxyqueuosine(34) in tRNA + AH2 = queuosine(34) in tRNA + A + H2O. The protein operates within tRNA modification; tRNA-queuosine biosynthesis. Catalyzes the conversion of epoxyqueuosine (oQ) to queuosine (Q), which is a hypermodified base found in the wobble positions of tRNA(Asp), tRNA(Asn), tRNA(His) and tRNA(Tyr). The polypeptide is Epoxyqueuosine reductase (Leadbetterella byssophila (strain DSM 17132 / JCM 16389 / KACC 11308 / NBRC 106382 / 4M15)).